Here is a 293-residue protein sequence, read N- to C-terminus: NAD kinase (293 aa).

Aspartate 74 (proton acceptor) is an active-site residue. Residues 74-75 (DG), 148-149 (NE), histidine 159, arginine 176, aspartate 178, threonine 186, 189-194 (TAYSLS), and glutamine 248 each bind NAD(+).

The protein belongs to the NAD kinase family. In terms of assembly, homodimer. It depends on a divalent metal cation as a cofactor.

It localises to the cytoplasm. The catalysed reaction is NAD(+) + ATP = ADP + NADP(+) + H(+). Functionally, involved in the regulation of the intracellular balance of NAD and NADP, and is a key enzyme in the biosynthesis of NADP. Catalyzes specifically the phosphorylation on 2'-hydroxyl of the adenosine moiety of NAD to yield NADP. The protein is NAD kinase of Yersinia pestis.